The following is a 183-amino-acid chain: Probable adenylyl-sulfate kinase (183 aa).

17–24 (GLPGSGKT) contributes to the ATP binding site. Ser-91 acts as the Phosphoserine intermediate in catalysis.

The protein belongs to the APS kinase family.

The catalysed reaction is adenosine 5'-phosphosulfate + ATP = 3'-phosphoadenylyl sulfate + ADP + H(+). Its pathway is sulfur metabolism; hydrogen sulfide biosynthesis; sulfite from sulfate: step 2/3. Its function is as follows. Catalyzes the synthesis of activated sulfate. This Aeropyrum pernix (strain ATCC 700893 / DSM 11879 / JCM 9820 / NBRC 100138 / K1) protein is Probable adenylyl-sulfate kinase (cysC).